Reading from the N-terminus, the 60-residue chain is Colanic acid capsular biosynthesis activation protein B (60 aa).

The chain is Colanic acid capsular biosynthesis activation protein B (rcsB) from Klebsiella aerogenes (Enterobacter aerogenes).